A 147-amino-acid chain; its full sequence is Nucleoside diphosphate kinase (147 aa).

Residues Lys9, Phe57, Arg85, Thr91, Arg102, and Asn112 each coordinate ATP. His115 acts as the Pros-phosphohistidine intermediate in catalysis.

This sequence belongs to the NDK family. Homotetramer. Mg(2+) serves as cofactor.

It is found in the cytoplasm. The catalysed reaction is a 2'-deoxyribonucleoside 5'-diphosphate + ATP = a 2'-deoxyribonucleoside 5'-triphosphate + ADP. It catalyses the reaction a ribonucleoside 5'-diphosphate + ATP = a ribonucleoside 5'-triphosphate + ADP. Major role in the synthesis of nucleoside triphosphates other than ATP. The ATP gamma phosphate is transferred to the NDP beta phosphate via a ping-pong mechanism, using a phosphorylated active-site intermediate. In Fervidobacterium nodosum (strain ATCC 35602 / DSM 5306 / Rt17-B1), this protein is Nucleoside diphosphate kinase.